A 453-amino-acid chain; its full sequence is Phosphoglucosamine mutase (453 aa).

The active-site Phosphoserine intermediate is the S110. Residues S110, D248, D250, and D252 each coordinate Mg(2+). The residue at position 110 (S110) is a Phosphoserine.

The protein belongs to the phosphohexose mutase family. The cofactor is Mg(2+). Post-translationally, activated by phosphorylation.

It carries out the reaction alpha-D-glucosamine 1-phosphate = D-glucosamine 6-phosphate. In terms of biological role, catalyzes the conversion of glucosamine-6-phosphate to glucosamine-1-phosphate. This Mycolicibacterium smegmatis (strain ATCC 700084 / mc(2)155) (Mycobacterium smegmatis) protein is Phosphoglucosamine mutase.